A 472-amino-acid polypeptide reads, in one-letter code: Chromosomal replication initiator protein DnaA (472 aa).

Positions 1–73 (MSNMEHDRWS…LTCWQAEMPE (73 aa)) are domain I, interacts with DnaA modulators. The segment at 73–128 (EVCRIDLTVRSPMRAAVTKEAPAPAEHRRDEHRPAADARSHAAAPAPSNHDALGGS) is domain II. The disordered stretch occupies residues 89 to 127 (VTKEAPAPAEHRRDEHRPAADARSHAAAPAPSNHDALGG). Positions 97 to 112 (AEHRRDEHRPAADARS) are enriched in basic and acidic residues. The segment covering 113-124 (HAAAPAPSNHDA) has biased composition (low complexity). The domain III, AAA+ region stretch occupies residues 129 to 351 (PLDPRLTFAS…GAINRLLAHS (223 aa)). The ATP site is built by Gly-176, Gly-178, Lys-179, and Thr-180. The segment at 352–472 (KLNAQPVTLE…VESLKRQLQE (121 aa)) is domain IV, binds dsDNA.

The protein belongs to the DnaA family. As to quaternary structure, oligomerizes as a right-handed, spiral filament on DNA at oriC.

It is found in the cytoplasm. Its function is as follows. Plays an essential role in the initiation and regulation of chromosomal replication. ATP-DnaA binds to the origin of replication (oriC) to initiate formation of the DNA replication initiation complex once per cell cycle. Binds the DnaA box (a 9 base pair repeat at the origin) and separates the double-stranded (ds)DNA. Forms a right-handed helical filament on oriC DNA; dsDNA binds to the exterior of the filament while single-stranded (ss)DNA is stabiized in the filament's interior. The ATP-DnaA-oriC complex binds and stabilizes one strand of the AT-rich DNA unwinding element (DUE), permitting loading of DNA polymerase. After initiation quickly degrades to an ADP-DnaA complex that is not apt for DNA replication. Binds acidic phospholipids. This Rhodopseudomonas palustris (strain BisB5) protein is Chromosomal replication initiator protein DnaA.